Consider the following 275-residue polypeptide: Reticulon-like protein B1 (275 aa).

2 stretches are compositionally biased toward basic and acidic residues: residues 1–10 (MAEEHKHDES) and 20–38 (VVER…HHGG). The segment at 1–68 (MAEEHKHDES…PSSPSSSMKS (68 aa)) is disordered. N-acetylalanine is present on A2. Over residues 59-68 (PSSPSSSMKS) the composition is skewed to low complexity. In terms of domain architecture, Reticulon spans 89–274 (PADIFMWKNK…PLGPLKNKKK (186 aa)). 3 helical membrane passes run 99-119 (KMSG…ELME), 120-140 (YHLL…LFLW), and 194-214 (FLIA…FNFL).

As to quaternary structure, interacts with VirB2. As to expression, predominantly expressed in root tissues.

It localises to the endoplasmic reticulum membrane. The protein localises to the cell membrane. In terms of biological role, plays a role in the Agrobacterium-mediated plant transformation via its interaction with VirB2, the major component of the T-pilus. This chain is Reticulon-like protein B1 (RTNLB1), found in Arabidopsis thaliana (Mouse-ear cress).